We begin with the raw amino-acid sequence, 576 residues long: Aspartate--tRNA ligase (576 aa).

Glutamate 170 contributes to the L-aspartate binding site. The aspartate stretch occupies residues 194–197 (QLFK). Arginine 216 contacts L-aspartate. ATP-binding positions include 216 to 218 (RDE) and glutamine 225. Residue histidine 438 coordinates L-aspartate. Residue glutamate 471 coordinates ATP. Arginine 478 contributes to the L-aspartate binding site. An ATP-binding site is contributed by 523-526 (GLDR).

This sequence belongs to the class-II aminoacyl-tRNA synthetase family. Type 1 subfamily. Homodimer.

Its subcellular location is the cytoplasm. The catalysed reaction is tRNA(Asp) + L-aspartate + ATP = L-aspartyl-tRNA(Asp) + AMP + diphosphate. Functionally, catalyzes the attachment of L-aspartate to tRNA(Asp) in a two-step reaction: L-aspartate is first activated by ATP to form Asp-AMP and then transferred to the acceptor end of tRNA(Asp). In Fervidobacterium nodosum (strain ATCC 35602 / DSM 5306 / Rt17-B1), this protein is Aspartate--tRNA ligase.